Reading from the N-terminus, the 688-residue chain is Glycine--tRNA ligase beta subunit (688 aa).

It belongs to the class-II aminoacyl-tRNA synthetase family. In terms of assembly, tetramer of two alpha and two beta subunits.

The protein localises to the cytoplasm. The catalysed reaction is tRNA(Gly) + glycine + ATP = glycyl-tRNA(Gly) + AMP + diphosphate. The polypeptide is Glycine--tRNA ligase beta subunit (Lactobacillus delbrueckii subsp. bulgaricus (strain ATCC BAA-365 / Lb-18)).